We begin with the raw amino-acid sequence, 431 residues long: Trigger factor (431 aa).

The PPIase FKBP-type domain maps to 161-245 (TDIVIGDVQK…VKEIKRMELP (85 aa)).

The protein belongs to the FKBP-type PPIase family. Tig subfamily.

It is found in the cytoplasm. The enzyme catalyses [protein]-peptidylproline (omega=180) = [protein]-peptidylproline (omega=0). Functionally, involved in protein export. Acts as a chaperone by maintaining the newly synthesized protein in an open conformation. Functions as a peptidyl-prolyl cis-trans isomerase. In Chloroherpeton thalassium (strain ATCC 35110 / GB-78), this protein is Trigger factor.